A 189-amino-acid polypeptide reads, in one-letter code: Mercury resistance operon ORF3 (189 aa).

The tat-type signal signal peptide spans 1–27; it reads MTSPSPTARRTRLRRRTALALAAAATA. The 152-residue stretch at 38 to 189 folds into the Thioredoxin domain; sequence TKANTPATRA…IQDALKKAGA (152 aa).

In terms of processing, predicted to be exported by the Tat system. The position of the signal peptide cleavage has not been experimentally proven.

It localises to the secreted. Its function is as follows. Probable mercury binding protein. The polypeptide is Mercury resistance operon ORF3 (Streptomyces lividans).